A 418-amino-acid chain; its full sequence is UDP-N-acetylglucosamine 1-carboxyvinyltransferase (418 aa).

Residue Lys-22 to Asn-23 coordinates phosphoenolpyruvate. Arg-92 serves as a coordination point for UDP-N-acetyl-alpha-D-glucosamine. Cys-116 serves as the catalytic Proton donor. Cys-116 is subject to 2-(S-cysteinyl)pyruvic acid O-phosphothioketal. UDP-N-acetyl-alpha-D-glucosamine is bound by residues Arg-121 to Leu-125, Asp-305, and Ile-327.

The protein belongs to the EPSP synthase family. MurA subfamily.

The protein localises to the cytoplasm. The enzyme catalyses phosphoenolpyruvate + UDP-N-acetyl-alpha-D-glucosamine = UDP-N-acetyl-3-O-(1-carboxyvinyl)-alpha-D-glucosamine + phosphate. It participates in cell wall biogenesis; peptidoglycan biosynthesis. Functionally, cell wall formation. Adds enolpyruvyl to UDP-N-acetylglucosamine. The chain is UDP-N-acetylglucosamine 1-carboxyvinyltransferase from Acidiphilium cryptum (strain JF-5).